The chain runs to 713 residues: Cyclomaltodextrin glucanotransferase (713 aa).

A signal peptide spans 1–27 (MKKISKLTTALALSLSLALSLLGPAHA). The A1 stretch occupies residues 28-165 (APDTSVSNKQ…NIKVIIDFAP (138 aa)). Residues aspartate 54, asparagine 56, asparagine 59, and asparagine 60 each coordinate Ca(2+). A disulfide bridge connects residues cysteine 70 and cysteine 77. Ca(2+) is bound by residues glycine 78 and aspartate 80. 127 to 128 (YW) is a binding site for substrate. A Ca(2+)-binding site is contributed by asparagine 166. A b region spans residues 166-229 (NHTSPASLDQ…NLYDLADLNH (64 aa)). Position 167 (histidine 167) interacts with substrate. Residue isoleucine 217 participates in Ca(2+) binding. Residue 220 to 223 (NLYD) participates in substrate binding. Aspartate 226 is a binding site for Ca(2+). Residues 230–433 (NNSTVDTYLK…LRKSNPAIAY (204 aa)) form an A2 region. Arginine 254 contributes to the substrate binding site. Aspartate 256 functions as the Nucleophile in the catalytic mechanism. Substrate is bound at residue 259 to 260 (KH). A Ca(2+)-binding site is contributed by histidine 260. The Proton donor role is filled by glutamate 284. Substrate-binding residues include histidine 354, aspartate 398, and arginine 402. The interval 434–522 (GTTQERWINN…GTAVWQYTTA (89 aa)) is c. Residues 523–609 (VTAPTIGHVG…SNVHDNFEVL (87 aa)) are d. An IPT/TIG domain is found at 526–607 (PTIGHVGPMM…TSSNVHDNFE (82 aa)). One can recognise a CBM20 domain in the interval 608-713 (VLSGDQVSVR…TATINVNWQP (106 aa)). The e stretch occupies residues 610-713 (SGDQVSVRFV…TATINVNWQP (104 aa)).

This sequence belongs to the glycosyl hydrolase 13 family. As to quaternary structure, monomer. The cofactor is Ca(2+).

It is found in the secreted. The enzyme catalyses Cyclizes part of a (1-&gt;4)-alpha-D-glucan chain by formation of a (1-&gt;4)-alpha-D-glucosidic bond.. This is Cyclomaltodextrin glucanotransferase (cgt) from Bacillus sp. (strain 17-1).